Reading from the N-terminus, the 104-residue chain is Photosystem II reaction center Psb28 protein (104 aa).

It belongs to the Psb28 family. Part of the photosystem II complex.

The protein localises to the cellular thylakoid membrane. The protein is Photosystem II reaction center Psb28 protein of Synechococcus sp. (strain JA-3-3Ab) (Cyanobacteria bacterium Yellowstone A-Prime).